The chain runs to 373 residues: Septin homolog spn3 (373 aa).

The Septin-type G domain maps to 10-286 (KGIPLNLMVV…ETYRTEKLST (277 aa)). The G1 motif stretch occupies residues 20-27 (GDVGLGRT). 20–27 (GDVGLGRT) is a GTP binding site. The segment at 79–82 (DTPH) is G3 motif. The tract at residues 161–164 (AKAD) is G4 motif. Residues 162–170 (KADSLTAQE) and Arg235 contribute to the GTP site. Ser303 is subject to Phosphoserine. The stretch at 311-357 (EDRLRAIELSVQKEIEEKRRQLLAREEALRALEEKLAASTAAMANAS) forms a coiled coil.

It belongs to the TRAFAC class TrmE-Era-EngA-EngB-Septin-like GTPase superfamily. Septin GTPase family. Component of the septin complex composed of two copies of each spn1, spn2, spn3 and spn4.

The protein resides in the cytoplasm. It is found in the cell cortex. Its function is as follows. Plays a role in the cell cycle. Involved in a late stage of septum formation leading to the separation of the daughter cells. The sequence is that of Septin homolog spn3 (spn3) from Schizosaccharomyces pombe (strain 972 / ATCC 24843) (Fission yeast).